We begin with the raw amino-acid sequence, 345 residues long: MNSKLFSPYTIKNVTLKNRIVMSPMCMYSSGNEDGRVTNFHLIHYGTRAAGQVGLVMVEATAVLAEGRISNNDLGIWDDNLIEGLHKTTTFIHDNGAKAAIQLAHAGRKAELDTNAFAPSAIPFNDKMKIPVEMNIQQIKETILAFQRAALRSKQAGFDVIELHGAHGYLINEFLSPLTNKRTDKYGGSPENRYRFLREIIDSVNEVWDGPIFVRISANDYHPDGLTVQDYVQYTKWMKEQGIDLIDCSSGAVVPAHIDVYPGYQVQYAKHIKEHTNIATGAVGLITTGSQAEQILNNNEADLIFIGRELLRNPYFPRIAANELGFELQEPHQYKRAPGKIHTNK.

23–26 (SPMC) is an FMN binding site. Substrate is bound at residue Tyr-28. FMN contacts are provided by Ala-60 and Gln-102. 164-167 (HGAH) serves as a coordination point for substrate. Residues Arg-215 and 307–308 (GR) contribute to the FMN site.

It belongs to the NADH:flavin oxidoreductase/NADH oxidase family. NamA subfamily. Homotetramer. It depends on FMN as a cofactor.

It catalyses the reaction A + NADPH + H(+) = AH2 + NADP(+). In terms of biological role, catalyzes the reduction of the double bond of an array of alpha,beta-unsaturated aldehydes and ketones. It also reduces the nitro group of nitroester and nitroaromatic compounds. It could have a role in detoxification processes. In Bacillus cereus (strain ATCC 14579 / DSM 31 / CCUG 7414 / JCM 2152 / NBRC 15305 / NCIMB 9373 / NCTC 2599 / NRRL B-3711), this protein is NADPH dehydrogenase.